The chain runs to 413 residues: Sprouty-related, EVH1 domain-containing protein 2 (413 aa).

Residues 5–122 form the WH1 domain; the sequence is THPNDDSYIV…RGVRKALEDL (118 aa). The segment at 122–163 is disordered; sequence LTEGSTTSSSTLQNEAELGDDDVFTTATDSSSNSSQKKDHST. The KBD domain maps to 195–248; that stretch reads FSRNLFPFEDEEIVRINPRERWMITGYEDYRYAAVPDKFIQPEDSDSYVQISKN. The 109-residue stretch at 303-411 folds into the SPR domain; sequence RCVYCRDMFN…CGCCGGKHKA (109 aa).

It is found in the cell membrane. Its subcellular location is the cytoplasmic vesicle. The protein localises to the secretory vesicle membrane. It localises to the cytoplasm. Functionally, negatively regulates Ras signaling pathways and downstream activation of MAP kinases. In Danio rerio (Zebrafish), this protein is Sprouty-related, EVH1 domain-containing protein 2 (spred2).